Here is a 681-residue protein sequence, read N- to C-terminus: MSKKKKTYQNTLSEKEAKKVIAKLADEIRHHQYLYYVKNQPEISDFDFDQLFKRLRDLEEEFPQFKDLNSPTLVVGSDLDKDFEKFQHKLPVLSLINTYNDDELLDWVNKTDPDGLYSVEWKIDGASIVLYYENGMLKNGVTRGSGGIGDDVTDNIRTVRNIPLRLPEPITVYLRGEVFMTFKDFEEFNELSSGKYANPRNLSAGSIKQKNSADTAKRPLRIFTYDATFPGFTKKFKTHQQILSKLEKLTFPVPPDTVFVNGSKIAETIKDFKKKKDTLGFPTDGLVIKLNDISKRDAQGYTSHSPRWARAYKFDAIMKESRIVDITYAVGRTGKITPRVEIEPVNLAGTTVTFATLHNQDYIDELGVGIGAIVRVAKRGEIIPAVEEVITPGKDVFKIPDYCPSCKTKTIKKENLVDLFCPNPDCPDRVKNGIIFYCQRKQMDIEGLGDKQIEFLYDHGYIRSIADLYDLKDQKEKLIEEEGFGEKSLAIIFNGIEHSKQKDFRFLLPSIGLPELGHKVTELLIEHGIDSIDEILSIAKDKKRISSLLEIPGIGPSTIKAFEENFSDKRILKLIARLKNAGLKLKADPIKVSDQQPFAGQSWCVTGSFENFQPRDKAMDLVVYYGGRKVSAVSSKTTHLLAGPGAGSKLEKANELGIVVYNEKQFLDLLKSLKINFKNTI.

NAD(+) is bound by residues 45 to 49 (DFDFD), 94 to 95 (SL), and E120. K122 serves as the catalytic N6-AMP-lysine intermediate. Positions 143, 177, 289, and 313 each coordinate NAD(+). Positions 403, 406, 421, and 426 each coordinate Zn(2+). The 89-residue stretch at 593-681 (SDQQPFAGQS…SLKINFKNTI (89 aa)) folds into the BRCT domain.

This sequence belongs to the NAD-dependent DNA ligase family. LigA subfamily. Requires Mg(2+) as cofactor. Mn(2+) is required as a cofactor.

It catalyses the reaction NAD(+) + (deoxyribonucleotide)n-3'-hydroxyl + 5'-phospho-(deoxyribonucleotide)m = (deoxyribonucleotide)n+m + AMP + beta-nicotinamide D-nucleotide.. In terms of biological role, DNA ligase that catalyzes the formation of phosphodiester linkages between 5'-phosphoryl and 3'-hydroxyl groups in double-stranded DNA using NAD as a coenzyme and as the energy source for the reaction. It is essential for DNA replication and repair of damaged DNA. The protein is DNA ligase of Leptospira borgpetersenii serovar Hardjo-bovis (strain L550).